The chain runs to 135 residues: Large ribosomal subunit protein uL16c (135 aa).

This sequence belongs to the universal ribosomal protein uL16 family. In terms of assembly, part of the 50S ribosomal subunit.

It localises to the plastid. Its subcellular location is the chloroplast. This Nandina domestica (Heavenly bamboo) protein is Large ribosomal subunit protein uL16c.